A 470-amino-acid polypeptide reads, in one-letter code: 6-phospho-beta-galactosidase 1 (470 aa).

Residues glutamine 23, histidine 120, asparagine 163, glutamate 164, and asparagine 300 each contribute to the D-galactose 6-phosphate site. The active-site Proton donor is glutamate 164. Glutamate 378 acts as the Nucleophile in catalysis. Residues serine 434, tryptophan 435, lysine 441, and tyrosine 443 each coordinate D-galactose 6-phosphate.

The protein belongs to the glycosyl hydrolase 1 family.

The enzyme catalyses a 6-phospho-beta-D-galactoside + H2O = D-galactose 6-phosphate + an alcohol. Its pathway is carbohydrate metabolism; lactose degradation; D-galactose 6-phosphate and beta-D-glucose from lactose 6-phosphate: step 1/1. This is 6-phospho-beta-galactosidase 1 from Streptococcus pneumoniae (strain ATCC BAA-255 / R6).